The following is a 247-amino-acid chain: Carboxy-S-adenosyl-L-methionine synthase (247 aa).

S-adenosyl-L-methionine-binding positions include tyrosine 40, 65-67 (GCS), 90-91 (DN), 122-123 (DI), asparagine 137, and arginine 204.

The protein belongs to the class I-like SAM-binding methyltransferase superfamily. Cx-SAM synthase family. As to quaternary structure, homodimer.

It catalyses the reaction prephenate + S-adenosyl-L-methionine = carboxy-S-adenosyl-L-methionine + 3-phenylpyruvate + H2O. In terms of biological role, catalyzes the conversion of S-adenosyl-L-methionine (SAM) to carboxy-S-adenosyl-L-methionine (Cx-SAM). This chain is Carboxy-S-adenosyl-L-methionine synthase, found in Pseudomonas syringae pv. tomato (strain ATCC BAA-871 / DC3000).